A 410-amino-acid chain; its full sequence is Mating-type locus allele B1 protein (410 aa).

A variable domain between B alleles region spans residues 1–110 (MSSDPNFSLI…FNVVSPDVGC (110 aa)). Residues 107–184 (DVGCRNLSED…NARRRSGWSH (78 aa)) constitute a DNA-binding region (homeobox; TALE-type). A highly conserved between B alleles region spans residues 111–410 (RNLSEDLPAY…PFLCLSVAFV (300 aa)). 3 disordered regions span residues 202 to 239 (RAKL…PLTP), 278 to 335 (TPKP…TPEL), and 374 to 395 (ARGN…PDEV). The span at 205-233 (LSSSNQSTPPSSTSDSLSNNLDDVLSDNL) shows a compositional bias: low complexity. The Nuclear localization signal motif lies at 276-308 (KKTPKPGMPRPVTTVAKRHPARKTKPAAKPKSR). A compositionally biased stretch (basic residues) spans 291 to 307 (AKRHPARKTKPAAKPKS). Positions 312–335 (PRASTTPSIDSTLDSSKLESTPEL) are enriched in polar residues. Residues 333–410 (PELSMCSTAD…PFLCLSVAFV (78 aa)) form a not essential for B1 function region. Residues 375–388 (RGNRKVKALPKRAG) are compositionally biased toward basic residues.

The protein belongs to the TALE/M-ATYP homeobox family.

It is found in the nucleus. Functionally, the B locus has at least 25 alleles, and any combination of two different B alleles yields a multimeric regulatory protein, that activates genes responsible for the pathogenicity and for the sexual development of the fungus within the corn plant. This is Mating-type locus allele B1 protein from Mycosarcoma maydis (Corn smut fungus).